The sequence spans 425 residues: MLDLKRIRTDFDTVAAKLKTRGVSEAILTSLKALDEQRRTLLVQTEELKAQRNIASAAIAQAKRQKEDASQQIADMQQLAANIKAIDAKLADIDQEITGIITVLPNTPHDSVPIGADEEDNVEIHRWGKPRQFDFDIKAHWDLGEALDILDWERGAKVTGARFLFYKNLGARLERALYNFMLDEHLKEGYQEIIPPYMVNHDSMFGTGQYPKFKEDTFELDGTNFVLIPTAEVPLTNYYRGDIIDGKELPIYFTAMSPSFRSEAGSAGRDTRGLIRLHQFHKVEMVKFAKPETSYEELEKMTANAEHILQKLKLPYRVLALCTGDMGFSAAKTYDLEVWIPAQNTYREISSCSNTEDFQARRAQIRYRDEADGKVKLLHTLNGSGLAVGRTVAAILENYQNEDGSVTIPEVLRPYMGGLEVIKPR.

T230 to E232 provides a ligand contact to L-serine. An ATP-binding site is contributed by R261–E263. E284 is an L-serine binding site. E348–S351 contacts ATP. Residue S384 participates in L-serine binding.

It belongs to the class-II aminoacyl-tRNA synthetase family. Type-1 seryl-tRNA synthetase subfamily. As to quaternary structure, homodimer. The tRNA molecule binds across the dimer.

It is found in the cytoplasm. It catalyses the reaction tRNA(Ser) + L-serine + ATP = L-seryl-tRNA(Ser) + AMP + diphosphate + H(+). The catalysed reaction is tRNA(Sec) + L-serine + ATP = L-seryl-tRNA(Sec) + AMP + diphosphate + H(+). The protein operates within aminoacyl-tRNA biosynthesis; selenocysteinyl-tRNA(Sec) biosynthesis; L-seryl-tRNA(Sec) from L-serine and tRNA(Sec): step 1/1. Its function is as follows. Catalyzes the attachment of serine to tRNA(Ser). Is also able to aminoacylate tRNA(Sec) with serine, to form the misacylated tRNA L-seryl-tRNA(Sec), which will be further converted into selenocysteinyl-tRNA(Sec). In Streptococcus equi subsp. equi (strain 4047), this protein is Serine--tRNA ligase.